A 491-amino-acid chain; its full sequence is NADH-quinone oxidoreductase subunit N 1 (491 aa).

14 consecutive transmembrane segments (helical) span residues 15 to 35 (VLGM…VDMF), 41 to 61 (VLLT…ALDY), 77 to 97 (FGVL…LIAF), 105 to 125 (LSQG…LFLV), 130 to 150 (LVTI…LTGF), 165 to 185 (LLLG…IYGM), 211 to 231 (PILL…VSMF), 247 to 269 (PVTA…RFLN), 279 to 299 (WQLL…IVAV), 307 to 327 (MLAY…LAAS), 333 to 353 (AFTV…AVLI), 378 to 398 (LALA…TAGF), 416 to 436 (LAII…RVIV), and 459 to 479 (LGVI…NIFT).

Belongs to the complex I subunit 2 family. In terms of assembly, NDH-1 is composed of 14 different subunits. Subunits NuoA, H, J, K, L, M, N constitute the membrane sector of the complex.

The protein resides in the cell membrane. The enzyme catalyses a quinone + NADH + 5 H(+)(in) = a quinol + NAD(+) + 4 H(+)(out). Functionally, NDH-1 shuttles electrons from NADH, via FMN and iron-sulfur (Fe-S) centers, to quinones in the respiratory chain. The immediate electron acceptor for the enzyme in this species is believed to be ubiquinone. Couples the redox reaction to proton translocation (for every two electrons transferred, four hydrogen ions are translocated across the cytoplasmic membrane), and thus conserves the redox energy in a proton gradient. This is NADH-quinone oxidoreductase subunit N 1 from Herpetosiphon aurantiacus (strain ATCC 23779 / DSM 785 / 114-95).